The primary structure comprises 178 residues: Large ribosomal subunit protein uL6 (178 aa).

Belongs to the universal ribosomal protein uL6 family. In terms of assembly, part of the 50S ribosomal subunit.

Functionally, this protein binds to the 23S rRNA, and is important in its secondary structure. It is located near the subunit interface in the base of the L7/L12 stalk, and near the tRNA binding site of the peptidyltransferase center. The chain is Large ribosomal subunit protein uL6 from Frankia casuarinae (strain DSM 45818 / CECT 9043 / HFP020203 / CcI3).